Consider the following 706-residue polypeptide: K(+)-insensitive pyrophosphate-energized proton pump (706 aa).

Transmembrane regions (helical) follow at residues 1 to 21, 62 to 82, 83 to 103, 128 to 148, and 164 to 184; these read MTAL…AIWA, IVIF…GFAI, GAIL…RANV, GMLV…FLVY, and VALG…GGIF. Lys186 lines the substrate pocket. Mg(2+) is bound by residues Asp189, Asp193, Asn216, and Asp219. The next 6 helical transmembrane spans lie at 231-251, 261-281, 298-318, 328-348, 376-398, and 412-432; these read LFET…IFFA, TLPL…TFFV, IATG…LIGF, GMSL…IIWI, IQGL…AGIL, and ATAT…FGPV. Asp434 is a Mg(2+) binding site. 4 helical membrane-spanning segments follow: residues 465–485, 516–536, 585–605, and 616–636; these read AVTK…LFAA, YVVV…AMGM, IIPS…IYAI, and AFSA…FVAI. Ca(2+) is bound by residues Asp646, Asp672, and Asp676. Position 679 (Lys679) interacts with substrate. The helical transmembrane segment at 685–705 threads the bilayer; it reads AVNPMIKITNIVALLLLAILA.

The protein belongs to the H(+)-translocating pyrophosphatase (TC 3.A.10) family. K(+)-insensitive subfamily. As to quaternary structure, homodimer. Mg(2+) is required as a cofactor.

The protein localises to the cell inner membrane. The enzyme catalyses diphosphate + H2O + H(+)(in) = 2 phosphate + 2 H(+)(out). Proton pump that utilizes the energy of pyrophosphate hydrolysis as the driving force for proton movement across the membrane. Generates a proton motive force. This is K(+)-insensitive pyrophosphate-energized proton pump from Bradyrhizobium diazoefficiens (strain JCM 10833 / BCRC 13528 / IAM 13628 / NBRC 14792 / USDA 110).